The following is a 241-amino-acid chain: DNA repair protein RecO (241 aa).

This sequence belongs to the RecO family.

Functionally, involved in DNA repair and RecF pathway recombination. This chain is DNA repair protein RecO, found in Dinoroseobacter shibae (strain DSM 16493 / NCIMB 14021 / DFL 12).